Consider the following 304-residue polypeptide: MEESSAAKIQLLKEFKFEKILKDDTKSKIITLYGKIRNEVALLLLEKTAFDLNTIKLDQLATFLQDTKLVENNDVFHWFLSTNFQDCSTLPSVKSTLIWPASETHVRKYSSQKKRMVCETPEMYLKVTKPFIETQRGPQIQWVENILTHKAEAERIVVEDPDPLNGFIVIPDLKWDRQTMSALNLMAIVHATDIASIRDLKYKHIPLLENIRNKVLTEVPKQFSVDKNQLKMFVHYLPSYYHLHVHILHVDHETGDGSAVGRAILLDDVIDRLRNSPDGLENVNITFNIGEQHFLFQPLTNMNA.

Residues E152, K174, and 235-246 contribute to the substrate site; that span reads HYLPSYYHLHVH. A Histidine triad motif motif is present at residues 242–246; it reads HLHVH. H244 serves as the catalytic Nucleophile.

It belongs to the HIT family.

The protein localises to the cytoplasm. It localises to the nucleus. It carries out the reaction a 5'-end (N(7)-methyl 5'-triphosphoguanosine)-ribonucleoside in mRNA + H2O = N(7)-methyl-GMP + a 5'-end diphospho-ribonucleoside in mRNA + 2 H(+). In terms of biological role, decapping scavenger enzyme that catalyzes the cleavage of a residual cap structure following the degradation of mRNAs by the 3'-&gt;5' exosome-mediated mRNA decay pathway. Hydrolyzes cap analog structures like 7-methylguanosine nucleoside triphosphate (m7GpppG) with up to 10 nucleotide substrates (small capped oligoribonucleotides) and specifically releases 5'-phosphorylated RNA fragments and 7-methylguanosine monophosphate (m7GMP). Has no activity towards mRNA molecules longer than 25 nucleotides. May also play a role in the 5'-&gt;3 mRNA decay pathway; m7GDP, the downstream product released by the 5'-&gt;3' mRNA mediated decapping activity, may be also converted by DCS1 to m7GMP. Inhibits mRNA translation. Binds to the m7GpppG cap analog. The polypeptide is m7GpppX diphosphatase (nhm1) (Schizosaccharomyces pombe (strain 972 / ATCC 24843) (Fission yeast)).